The chain runs to 456 residues: Methylthioribose-1-phosphate isomerase (456 aa).

Residues 40-113 (KGLVHGGFIF…CFKGEDKVFE (74 aa)) are thioesterase. An MTR-1-P isomerase region spans residues 124–456 (MFWRGEKMEV…PERITEALKD (333 aa)). Residues 176 to 178 (RGA), R211, and Q309 each bind substrate. Residue D350 is the Proton donor of the active site. Residue 360–361 (NK) coordinates substrate.

This sequence belongs to the eIF-2B alpha/beta/delta subunits family. MtnA subfamily.

The enzyme catalyses 5-(methylsulfanyl)-alpha-D-ribose 1-phosphate = 5-(methylsulfanyl)-D-ribulose 1-phosphate. Its pathway is amino-acid biosynthesis; L-methionine biosynthesis via salvage pathway; L-methionine from S-methyl-5-thio-alpha-D-ribose 1-phosphate: step 1/6. Functionally, catalyzes the interconversion of methylthioribose-1-phosphate (MTR-1-P) into methylthioribulose-1-phosphate (MTRu-1-P). This is Methylthioribose-1-phosphate isomerase (mtnA) from Aquifex aeolicus (strain VF5).